We begin with the raw amino-acid sequence, 537 residues long: MATIAGSRAPTEVPSHPYTCNTCQVAFRNSELQRGHMRSDWHRYNLKRRVASLPPISSEVFTEKVLQARAATTAQADKAGFEKTCEVCQKTYYSENSFRNHLSSTKHKSKAAAAARRPANNKVDDDVSSMSFSLGEPARADSVVDSEAEEEFSEVVEGIKNASIHDTASPIKRPSAPQPAVEEQSKTDAQMEETPTTTPKPEALTPSATTCVFCNYESPTPQLNASHMERIHGMFIPEKQYLVDLEGLLKHLWEKVFRYNECLTCGKMKVNVFAIQTHMRDKSHYHIPYTTEEEQLEIGEFYDFRSTYSDGDWETEEEDKGEEDGGVRLGAKRESKVVDENGDEVMEDEEGWETDSDASSLDTDDLHAVPAEGHYHQYERLGKHPHHSRENKKAHREADGIHAPSKRTHAVYYDEYELHLPSGKSVGHRSLARYYRQNLYHYPTPEERAERLAIEAAERENRMDVDGEEPERGRTRTRALVPRDIKGLGVTTMSDPRVRGIVQKGKKEEWKNRDSKWWMHSQVAIKEKAKHPSTYLR.

2 consecutive C2H2-type zinc fingers follow at residues 18-42 (YTCN…SDWH) and 83-107 (KTCE…STKH). Disordered regions lie at residues 101-151 (HLSS…AEEE) and 163-204 (SIHD…PEAL). Residues 192 to 204 (EETPTTTPKPEAL) are compositionally biased toward low complexity. Residues 260–284 (NECLTCGKMKVNVFAIQTHMRDKSH) form a C2H2-type 3 zinc finger. The span at 312-322 (DWETEEEDKGE) shows a compositional bias: acidic residues. Disordered regions lie at residues 312-361 (DWET…ASSL) and 382-401 (GKHP…ADGI). The segment covering 323–339 (EDGGVRLGAKRESKVVD) has biased composition (basic and acidic residues). The span at 340-356 (ENGDEVMEDEEGWETDS) shows a compositional bias: acidic residues. Residues 383-395 (KHPHHSRENKKAH) show a composition bias toward basic residues.

It belongs to the REI1 family. As to quaternary structure, associates with nascent pre-60S particles that have not yet entered the translating pool, and is released from mature 60S subunits.

It is found in the cytoplasm. Functionally, pre-60S-associated factor involved in the cytoplasmic maturation of the 60S subunit. Involved in the dissociation and recycling of other late pre-60S factors before newly synthesized large ribosomal subunits enter translation. This chain is Cytoplasmic 60S subunit biogenesis factor REI1 homolog, found in Chaetomium thermophilum (strain DSM 1495 / CBS 144.50 / IMI 039719) (Thermochaetoides thermophila).